The following is a 272-amino-acid chain: Methyl-CpG-binding domain-containing protein 2 (272 aa).

Polar residues predominate over residues 1 to 15 (MSMSQSRAVQRSSSP). The interval 1 to 24 (MSMSQSRAVQRSSSPNEDRGENQL) is disordered. A CW-type zinc finger spans residues 53 to 112 (CPSIGAFTVQCASCFKWRLMPSMQKYEEIREQLLENPFFCDTAREWKPDISCDVPADIYQ). Positions 62–104 (QCASCFKWRLMPSMQKYEEIREQLLENPFFCDTAREWKPDISC) match the MBD-associated domain (MAD) motif. Positions 63, 66, 92, and 104 each coordinate Zn(2+). The region spanning 118–192 (WAIDKPNISR…SQFSFQIPKP (75 aa)) is the MBD domain. Over residues 236–250 (LGTPTESGLNNSHYQ) the composition is skewed to polar residues. The interval 236 to 272 (LGTPTESGLNNSHYQPSKKKKTSTLSIFGSNDELADR) is disordered.

As to quaternary structure, interacts (via MBD domain) with DDM1. As to expression, expressed in buds, flowers, stems, siliques and mature seeds.

It localises to the nucleus. In terms of biological role, probable transcriptional regulator. The sequence is that of Methyl-CpG-binding domain-containing protein 2 (MBD2) from Arabidopsis thaliana (Mouse-ear cress).